The following is a 52-amino-acid chain: AANQHLCGAHLVEALYLVCGERGFFYTPNKVGIVEQCCHSPCSLYDLENYCN.

Cystine bridges form between C7-C38, C19-C51, and C37-C42.

It belongs to the insulin family. In terms of assembly, heterodimer of a B chain and an A chain linked by two disulfide bonds.

The protein resides in the secreted. Insulin decreases blood glucose concentration. It increases cell permeability to monosaccharides, amino acids and fatty acids. It accelerates glycolysis, the pentose phosphate cycle, and glycogen synthesis in liver. The protein is Insulin-2 of Huso dauricus (Kaluga sturgeon).